A 347-amino-acid polypeptide reads, in one-letter code: Protein XRP2 (347 aa).

The span at 1–11 (MGCCFTKRRKS) shows a compositional bias: basic residues. The segment at 1 to 22 (MGCCFTKRRKSEKAEGEEEQPK) is disordered. A lipid anchor (N-myristoyl glycine) is attached at Gly2. Cys3 carries the S-palmitoyl cysteine lipid modification. Residues 21-176 (PKLYSWDQRE…IWSHVHDFTP (156 aa)) form the C-CAP/cofactor C-like domain. GTP is bound by residues 95–96 (GS) and 112–115 (QQFR).

This sequence belongs to the TBCC family. As to quaternary structure, found in a complex with ARL3, RP2 and UNC119 (or UNC119B); RP2 induces hydrolysis of GTP ARL3 in the complex, leading to the release of UNC119 (or UNC119B). Interacts with ARL3; interaction is direct and stimulated with the activated GTP-bound form of ARL3. In terms of processing, myristoylated on Gly-2; which may be required for membrane targeting. Palmitoylated on Cys-3; which may be required for plasma membrane targeting. As to expression, retina (at protein level).

It is found in the cell membrane. Its subcellular location is the cell projection. The protein resides in the cilium. Acts as a GTPase-activating protein (GAP) involved in trafficking between the Golgi and the ciliary membrane. Involved in localization of proteins, such as NPHP3, to the cilium membrane by inducing hydrolysis of GTP ARL3, leading to the release of UNC119 (or UNC119B). Acts as a GTPase-activating protein (GAP) for tubulin in concert with tubulin-specific chaperone C, but does not enhance tubulin heterodimerization. Acts as a guanine nucleotide dissociation inhibitor towards ADP-ribosylation factor-like proteins. The protein is Protein XRP2 (Rp2) of Mus musculus (Mouse).